A 69-amino-acid polypeptide reads, in one-letter code: Calcium-binding protein (69 aa).

EF-hand domains follow at residues 2 to 37 and 38 to 69; these read VNRTEAAQLLKHLDRDKSGKISSQELMEFLHTVNCP and FKKEQVEKFIKQHDKDGDGQLNTDELLDVLCS. D15, D17, S19, K21, E26, D51, D53, D55, Q57, and E62 together coordinate Ca(2+).

The sequence is that of Calcium-binding protein from Schistosoma mansoni (Blood fluke).